We begin with the raw amino-acid sequence, 70 residues long: Peptide Hp1035 (70 aa).

The N-terminal stretch at 1 to 23 (MKTQFVILLVALVLFQMFAQSEA) is a signal peptide. Phe-36 carries the phenylalanine amide modification. Positions 40 to 70 (GLQDLDMDDLDQLFDGEISQADINFLNQLMR) are excised as a propeptide.

It belongs to the non-disulfide-bridged peptide (NDBP) superfamily. Short antimicrobial peptide (group 4) family. As to expression, expressed by the venom gland.

Its subcellular location is the secreted. The protein resides in the target cell membrane. Its function is as follows. Amphipathic peptide with antimicrobial activity. The protein is Peptide Hp1035 of Heterometrus petersii (Asian forest scorpion).